The primary structure comprises 378 residues: Stimulator of interferon genes protein (378 aa).

Topologically, residues M1–R17 are cytoplasmic. A mediates interaction with ZDHHC1 and ZDHHC11 region spans residues M1–L190. A helical membrane pass occupies residues A18 to W34. Residues G35–L44 are Lumenal-facing. Residues R45–E69 traverse the membrane as a helical segment. The Cytoplasmic portion of the chain corresponds to L70 to C91. 2 S-palmitoyl cysteine lipidation sites follow: C88 and C91. The helical transmembrane segment at P92–Y106 threads the bilayer. Residues F107–P116 lie on the Lumenal side of the membrane. A helical membrane pass occupies residues L117 to L134. At G135–F378 the chain is on the cytoplasmic side. A Glycyl lysine isopeptide (Lys-Gly) (interchain with G-Cter in ubiquitin) cross-link involves residue K150. Residues F153–E339 are cyclic dinucleotide-binding domain (CBD). Residues S162 and Y167 each contribute to the 2',3'-cGAMP site. 3',3'-c-di-GMP is bound by residues S162 and Y167. 2',3'-cUAMP is bound at residue Y167. A Glycyl lysine isopeptide (Lys-Gly) (interchain with G-Cter in ubiquitin) cross-link involves residue K236. The 2',3'-cGAMP site is built by R238 and T263. Residues R238 and T263 each coordinate 2',3'-cUAMP. 3',3'-c-di-GMP-binding positions include R238–T241 and T263. Residues E339 to F378 are C-terminal tail (CTT). S354 carries the phosphoserine modification. T355 bears the Phosphothreonine mark. Residues S357 and S365 each carry the phosphoserine; by TBK1 modification. The pLxIS motif signature appears at L362–S365.

Belongs to the STING family. In terms of assembly, homodimer; forms a homodimer in absence of cyclic nucleotide (c-di-GMP or cGAMP); 'Lys-63'-linked ubiquitination at Lys-150 is required for homodimerization. Homotetramer; in presence of cyclic nucleotide (c-di-GMP or cGAMP), forms tetramers and higher-order oligomers through side-by-side packing. Interacts (when phosphorylated) with IRF3; following activation and phosphorylation on the pLxIS motif by TBK1, recruits IRF3. Interacts with DDX58/RIG-I, MAVS and SSR2. Interacts with RNF5 and TRIM56. Interacts with TBK1; when homodimer, leading to subsequent production of IFN-beta. Interacts with IFIT1 and IFIT2. Interacts with TRIM29; this interaction induces STING1 ubiquitination and subsequent degradation. Associates with the MHC-II complex. Interacts with STEEP1; interaction takes place upon cGAMP-activation and STING1 phosphorylation by MAP3K7/TAK1 and promotes STING1 translocation to COPII vesicles. Interacts with SEC24A, SEC24B and SEC24C; promoting translocation to COPII vesicles. Interacts (when ubiquitinated) with SQSTM1; leading to relocalization to autophagosomes. Interacts with SURF4. Interacts with HNRNPA2B1. Interacts with ZDHHC1; ZDHHC1 constitutively interacts with STING1 and in presence of DNA viruses activates it by promoting its cGAMP-induced oligomerization and the recruitment of downstream signaling components. Interacts with ZDHHC11; in presence of DNA viruses promotes the recruitment of IRF3 to STING1. Interacts with TOMM70. Interacts with TAB1; promoting recruitment of TAB1 to the endoplasmic reticulum membrane and subsequent activation of MAP3K7/TAK1. Interacts (via transmembrane domain) with TMEM203. Interacts with DDX41. (Microbial infection) Interacts with African swine fever virus/ASFV protein A528R; this interaction mediates STING1 degradation. As to quaternary structure, (Microbial infection) Interacts with African swine fever virus/ASFV minor capsid protein p17. In terms of assembly, (Microbial infection) Interacts with Pseudorabies virus protein UL13; this interaction mediates STING1 degradation in a RNF5-dependent manner. Post-translationally, phosphorylation by TBK1 leads to activation and production of IFN-beta. Following cyclic nucleotide (c-di-GMP or cGAMP)-binding, activation and translocation from the endoplasmic reticulum, STING1 is phosphorylated by TBK1 at Ser-365 in the pLxIS motif. The phosphorylated pLxIS motif constitutes an IRF3-binding motif, leading to recruitment of the transcription factor IRF3 to induce type-I interferons and other cytokines. Phosphorylated on tyrosine residues upon MHC-II aggregation. Dephosphorylation by PPP6C leads to inactivation and decreased production of IFN-beta. Phosphorylation at Ser-357 is also required to activate IRF3. Phosphorylation at Ser-354 by MAP3K7/TAK1 facilitates its interaction with STEEP1, promoting STING1 translocation to COPII vesicles. Ubiquitinated. Ubiquitinated via 'Lys-63'-linked ubiquitin chains in response to double-stranded DNA treatment, leading to relocalization to autophagosomes and subsequent degradation; this process is dependent on SQSTM1. 'Lys-63'-linked ubiquitination mediated by TRIM56 at Lys-150 promotes homodimerization and recruitment of the antiviral kinase TBK1 and subsequent production of IFN-beta. 'Lys-48'-linked polyubiquitination at Lys-150 occurring after viral infection is mediated by RNF5 and leads to proteasomal degradation. 'Lys-11'-linked polyubiquitination at Lys-150 by RNF26 leads to stabilize STING1: it protects STING1 from RNF5-mediated 'Lys-48'-linked polyubiquitination. 'Lys-33'-linked and 'Lys-48'-linked deubiquitinated by USP20; leading to its stabilization and promotion of innate antiviral response. 'Lys-48'-linked deubiquitinated by USP44; leading to its stabilization and promotion of innate antiviral response. Deubiquitinated by USP13; leading to inhibition of innate antiviral response. 'Lys-63'-linked deubiquitinated by USP49; leading to inhibition of the subsequent recruitment of TBK1 to the signaling complex. 'Lys-63'-linked ubiquitination mediated by RNF39 promotes the activation of the cGAS-STING pathway. In terms of processing, palmitoylation takes place in the Golgi apparatus and creates a platform for the recruitment of TBK1. As to expression, expressed at higher level in the spleen, lymph node, lung and bone marrow, followed by the small intestine, heart, liver and brain, and to a lesser extent in the stomach and kidney.

Its subcellular location is the endoplasmic reticulum membrane. The protein resides in the cytoplasm. The protein localises to the perinuclear region. It localises to the endoplasmic reticulum-Golgi intermediate compartment membrane. It is found in the golgi apparatus membrane. Its subcellular location is the cytoplasmic vesicle. The protein resides in the autophagosome membrane. The protein localises to the mitochondrion outer membrane. It localises to the cell membrane. The enzyme catalyses H(+)(in) = H(+)(out). In terms of biological role, facilitator of innate immune signaling that acts as a sensor of cytosolic DNA from bacteria and viruses and promotes the production of type I interferon (IFN-alpha and IFN-beta). Innate immune response is triggered in response to non-CpG double-stranded DNA from viruses and bacteria delivered to the cytoplasm. Acts by binding cyclic dinucleotides: recognizes and binds cyclic di-GMP (c-di-GMP), a second messenger produced by bacteria, cyclic UMP-AMP (2',3'-cUAMP), and cyclic GMP-AMP (cGAMP), a messenger produced by CGAS in response to DNA virus in the cytosol. Upon binding to c-di-GMP, cUAMP or cGAMP, STING1 oligomerizes, translocates from the endoplasmic reticulum and is phosphorylated by TBK1 on the pLxIS motif, leading to recruitment and subsequent activation of the transcription factor IRF3 to induce expression of type I interferon and exert a potent anti-viral state. Exhibits 2',3' phosphodiester linkage-specific ligand recognition: can bind both 2'-3' linked cGAMP (2'-3'-cGAMP) and 3'-3' linked cGAMP but is preferentially activated by 2'-3' linked cGAMP. The preference for 2'-3'-cGAMP, compared to other linkage isomers is probably due to the ligand itself, whichs adopts an organized free-ligand conformation that resembles the STING1-bound conformation and pays low energy costs in changing into the active conformation. In addition to promote the production of type I interferons, plays a direct role in autophagy. Following cGAMP-binding, STING1 buds from the endoplasmic reticulum into COPII vesicles, which then form the endoplasmic reticulum-Golgi intermediate compartment (ERGIC). The ERGIC serves as the membrane source for WIPI2 recruitment and LC3 lipidation, leading to formation of autophagosomes that target cytosolic DNA or DNA viruses for degradation by the lysosome. Promotes autophagy by acting as a proton channel that directs proton efflux from the Golgi to facilitate MAP1LC3B/LC3B lipidation. The autophagy- and interferon-inducing activities can be uncoupled and autophagy induction is independent of TBK1 phosphorylation. Autophagy is also triggered upon infection by bacteria: following c-di-GMP-binding, which is produced by live Gram-positive bacteria, promotes reticulophagy. May be involved in translocon function, the translocon possibly being able to influence the induction of type I interferons. May be involved in transduction of apoptotic signals via its association with the major histocompatibility complex class II (MHC-II). This chain is Stimulator of interferon genes protein, found in Sus scrofa (Pig).